We begin with the raw amino-acid sequence, 68 residues long: Conotoxin VnMMSK-01 (68 aa).

An N-terminal signal peptide occupies residues 1 to 20 (MMSKLGVLLTICLLLFPLTA). A propeptide spanning residues 21 to 50 (VPMDGDQPADLPALRTQDFEPERSPWFDPV) is cleaved from the precursor. 3 disulfides stabilise this stretch: Cys53–Cys65, Cys54–Cys61, and Cys58–Cys64. A 4-hydroxyproline modification is found at Pro63.

This sequence belongs to the conotoxin M superfamily. As to expression, expressed by the venom duct.

The protein resides in the secreted. The chain is Conotoxin VnMMSK-01 from Conus ventricosus (Mediterranean cone).